The sequence spans 331 residues: Ketol-acid reductoisomerase (NADP(+)) (331 aa).

In terms of domain architecture, KARI N-terminal Rossmann spans 2–182; sequence AKIYTDKDAS…GATRAGVIET (181 aa). NADP(+)-binding positions include 25 to 28, Arg48, Ser53, and 83 to 86; these read YGIQ and DMEQ. His108 is a catalytic residue. Gly134 serves as a coordination point for NADP(+). A KARI C-terminal knotted domain is found at 183–328; it reads TFAEETETDL…AEMRKLLFGR (146 aa). Positions 191, 195, 227, and 231 each coordinate Mg(2+). Position 252 (Ser252) interacts with substrate.

It belongs to the ketol-acid reductoisomerase family. Requires Mg(2+) as cofactor.

It carries out the reaction (2R)-2,3-dihydroxy-3-methylbutanoate + NADP(+) = (2S)-2-acetolactate + NADPH + H(+). It catalyses the reaction (2R,3R)-2,3-dihydroxy-3-methylpentanoate + NADP(+) = (S)-2-ethyl-2-hydroxy-3-oxobutanoate + NADPH + H(+). The protein operates within amino-acid biosynthesis; L-isoleucine biosynthesis; L-isoleucine from 2-oxobutanoate: step 2/4. Its pathway is amino-acid biosynthesis; L-valine biosynthesis; L-valine from pyruvate: step 2/4. Involved in the biosynthesis of branched-chain amino acids (BCAA). Catalyzes an alkyl-migration followed by a ketol-acid reduction of (S)-2-acetolactate (S2AL) to yield (R)-2,3-dihydroxy-isovalerate. In the isomerase reaction, S2AL is rearranged via a Mg-dependent methyl migration to produce 3-hydroxy-3-methyl-2-ketobutyrate (HMKB). In the reductase reaction, this 2-ketoacid undergoes a metal-dependent reduction by NADPH to yield (R)-2,3-dihydroxy-isovalerate. This is Ketol-acid reductoisomerase (NADP(+)) from Pyrobaculum islandicum (strain DSM 4184 / JCM 9189 / GEO3).